Here is a 763-residue protein sequence, read N- to C-terminus: Xaa-Pro dipeptidyl-peptidase (763 aa).

Active-site charge relay system residues include Ser348, Asp468, and His498.

Belongs to the peptidase S15 family. Homodimer.

The protein resides in the cytoplasm. The catalysed reaction is Hydrolyzes Xaa-Pro-|- bonds to release unblocked, N-terminal dipeptides from substrates including Ala-Pro-|-p-nitroanilide and (sequentially) Tyr-Pro-|-Phe-Pro-|-Gly-Pro-|-Ile.. Its function is as follows. Removes N-terminal dipeptides sequentially from polypeptides having unsubstituted N-termini provided that the penultimate residue is proline. The sequence is that of Xaa-Pro dipeptidyl-peptidase (pepX) from Lactococcus lactis subsp. lactis (strain IL1403) (Streptococcus lactis).